Here is a 146-residue protein sequence, read N- to C-terminus: DNA protection during starvation protein 2 (146 aa).

Fe cation-binding residues include H27, D54, and E58.

It belongs to the Dps family. The 12 subunits form a hollow sphere into which the mineral iron core of up to 500 Fe(3+) can be deposited. Homododecamer.

The protein resides in the cytoplasm. The catalysed reaction is 2 Fe(2+) + H2O2 + 2 H(+) = 2 Fe(3+) + 2 H2O. Its function is as follows. Protects DNA from oxidative damage by sequestering intracellular Fe(2+) ion and storing it in the form of Fe(3+) oxyhydroxide mineral. One hydrogen peroxide oxidizes two Fe(2+) ions, which prevents hydroxyl radical production by the Fenton reaction. It is capable of binding and sequestering Fe(2+) ion. Does not bind DNA. In Bacillus anthracis, this protein is DNA protection during starvation protein 2 (dps2).